We begin with the raw amino-acid sequence, 147 residues long: Large ribosomal subunit protein uL11 (147 aa).

This sequence belongs to the universal ribosomal protein uL11 family. Part of the ribosomal stalk of the 50S ribosomal subunit. Interacts with L10 and the large rRNA to form the base of the stalk. L10 forms an elongated spine to which L12 dimers bind in a sequential fashion forming a multimeric L10(L12)X complex. In terms of processing, one or more lysine residues are methylated.

Functionally, forms part of the ribosomal stalk which helps the ribosome interact with GTP-bound translation factors. The protein is Large ribosomal subunit protein uL11 of Bacteroides thetaiotaomicron (strain ATCC 29148 / DSM 2079 / JCM 5827 / CCUG 10774 / NCTC 10582 / VPI-5482 / E50).